Consider the following 294-residue polypeptide: Probable aspartoacylase (294 aa).

The Zn(2+) site is built by H14 and E17. Substrate is bound by residues R56 and 63–64 (NR). H106 contacts Zn(2+). Substrate-binding residues include E164 and Y275.

Belongs to the AspA/AstE family. Aspartoacylase subfamily. Requires Zn(2+) as cofactor.

It catalyses the reaction an N-acyl-L-aspartate + H2O = a carboxylate + L-aspartate. This chain is Probable aspartoacylase, found in Nostoc sp. (strain PCC 7120 / SAG 25.82 / UTEX 2576).